The primary structure comprises 344 residues: Methionine import ATP-binding protein MetN (344 aa).

Positions 2-241 (IELQGLSQRF…PQHEVTRAMI (240 aa)) constitute an ABC transporter domain. 38–45 (GRSGAGKS) serves as a coordination point for ATP.

Belongs to the ABC transporter superfamily. Methionine importer (TC 3.A.1.24) family. In terms of assembly, the complex is composed of two ATP-binding proteins (MetN), two transmembrane proteins (MetI) and a solute-binding protein (MetQ).

It localises to the cell inner membrane. It carries out the reaction L-methionine(out) + ATP + H2O = L-methionine(in) + ADP + phosphate + H(+). The catalysed reaction is D-methionine(out) + ATP + H2O = D-methionine(in) + ADP + phosphate + H(+). Part of the ABC transporter complex MetNIQ involved in methionine import. Responsible for energy coupling to the transport system. The protein is Methionine import ATP-binding protein MetN of Cupriavidus metallidurans (strain ATCC 43123 / DSM 2839 / NBRC 102507 / CH34) (Ralstonia metallidurans).